A 37-amino-acid chain; its full sequence is MKVRASVKKICRNCKIVRRNGVVRVICSDGRHKQRQG.

Belongs to the bacterial ribosomal protein bL36 family.

This Alkalilimnicola ehrlichii (strain ATCC BAA-1101 / DSM 17681 / MLHE-1) protein is Large ribosomal subunit protein bL36.